The primary structure comprises 608 residues: Chaperone protein HtpG (608 aa).

The segment at 1–332 (MQFQTEVNQL…VEDLPLNVSR (332 aa)) is a; substrate-binding. The interval 333–536 (EILQENQILK…KNKPDFAMQQ (204 aa)) is b. Residues 537 to 608 (LLKQMGQEQN…LTKIINKAFS (72 aa)) form a c region.

It belongs to the heat shock protein 90 family. In terms of assembly, homodimer.

It is found in the cytoplasm. Molecular chaperone. Has ATPase activity. This Campylobacter jejuni subsp. jejuni serotype O:23/36 (strain 81-176) protein is Chaperone protein HtpG.